We begin with the raw amino-acid sequence, 284 residues long: Bifunctional protein FolD (284 aa).

Residues 166–168 (GAS) and I232 contribute to the NADP(+) site.

The protein belongs to the tetrahydrofolate dehydrogenase/cyclohydrolase family. In terms of assembly, homodimer.

The catalysed reaction is (6R)-5,10-methylene-5,6,7,8-tetrahydrofolate + NADP(+) = (6R)-5,10-methenyltetrahydrofolate + NADPH. It catalyses the reaction (6R)-5,10-methenyltetrahydrofolate + H2O = (6R)-10-formyltetrahydrofolate + H(+). Its pathway is one-carbon metabolism; tetrahydrofolate interconversion. Its function is as follows. Catalyzes the oxidation of 5,10-methylenetetrahydrofolate to 5,10-methenyltetrahydrofolate and then the hydrolysis of 5,10-methenyltetrahydrofolate to 10-formyltetrahydrofolate. The protein is Bifunctional protein FolD of Shewanella baltica (strain OS195).